We begin with the raw amino-acid sequence, 1383 residues long: Insulin receptor (1383 aa).

An N-terminal signal peptide occupies residues Met1–Gly26. Extracellular-facing segments span residues His27–Ser759 and Ser764–Lys957. Cys34 and Cys52 form a disulfide bridge. 4 N-linked (GlcNAc...) asparagine glycosylation sites follow: Asn42, Asn51, Asn104, and Asn137. Intrachain disulfides connect Cys152–Cys181, Cys185–Cys208, Cys195–Cys214, Cys218–Cys227, Cys222–Cys233, Cys234–Cys242, Cys238–Cys251, Cys254–Cys263, and Cys267–Cys279. N-linked (GlcNAc...) asparagine glycosylation is present at Asn241. N-linked (GlcNAc...) asparagine glycosylation occurs at Asn281. Disulfide bonds link Cys285–Cys310, Cys292–Cys300, Cys314–Cys327, Cys330–Cys334, and Cys338–Cys359. Residue Asn321 is glycosylated (N-linked (GlcNAc...) asparagine). A glycan (N-linked (GlcNAc...) asparagine) is linked at Asn363. Ser399 carries the post-translational modification Phosphoserine. Tyr400 is modified (phosphotyrosine). Ser406 bears the Phosphoserine mark. Asn423 and Asn444 each carry an N-linked (GlcNAc...) asparagine glycan. Cys461 and Cys494 are joined by a disulfide. Residues Asn540, Asn634, Asn652, and Asn699 are each glycosylated (N-linked (GlcNAc...) asparagine). In terms of domain architecture, Fibronectin type-III 1 spans Val625–Ser727. Cys675 and Cys900 are joined by a disulfide. A disordered region spans residues Ser687–Glu709. The interval Glu734–Phe742 is insulin-binding. A disordered region spans residues Thr747 to Asn783. Fibronectin type-III domains follow at residues Glu754–Glu848 and Ile854–Tyr948. N-linked (GlcNAc...) asparagine glycans are attached at residues Asn770, Asn783, Asn921, and Asn934. Positions Val771–Asn783 are enriched in polar residues. The helical transmembrane segment at Ile958–Leu978 threads the bilayer. The Cytoplasmic segment spans residues Phe979–Ser1383. The interval Asn997–Tyr1000 is important for interaction with IRS1, SHC1 and STAT5B. Position 1000 is a phosphotyrosine; by autocatalysis (Tyr1000). The Protein kinase domain occupies Ile1024–Phe1299. ATP-binding residues include Ser1034 and Lys1058. A Glycyl lysine isopeptide (Lys-Gly) (interchain with G-Cter in ubiquitin) cross-link involves residue Lys1080. Position 1084 is an S-nitrosocysteine (Cys1084). Glu1105 to Asp1111 contacts ATP. Residue Asp1160 is the Proton donor/acceptor of the active site. Residues Arg1164 to Asn1165 and Asp1178 each bind ATP. Phosphotyrosine; by autocatalysis occurs at positions 1186, 1190, 1191, 1356, and 1362. Positions Pro1361–Ser1383 are disordered. The segment at Tyr1362–Met1365 is PIK3R1 binding.

It belongs to the protein kinase superfamily. Tyr protein kinase family. Insulin receptor subfamily. Tetramer of 2 alpha and 2 beta chains linked by disulfide bonds. The alpha chains carry the insulin-binding regions, while the beta chains carry the kinase domain. Forms a hybrid receptor with IGF1R, the hybrid is a tetramer consisting of 1 alpha chain and 1 beta chain of INSR and 1 alpha chain and 1 beta chain of IGF1R. Interacts with SORBS1 but dissociates from it following insulin stimulation. Binds SH2B2. Activated form of INSR interacts (via Tyr-1000) with the PTB/PID domains of IRS1 and SHC1. The sequences surrounding the phosphorylated NPXY motif contribute differentially to either IRS1 or SHC1 recognition. Interacts (via tyrosines in the C-terminus) with IRS2 (via PTB domain and 591-786 AA); the 591-786 would be the primary anchor of IRS2 to INSR while the PTB domain would have a stabilizing action on the interaction with INSR. Interacts with the SH2 domains of the 85 kDa regulatory subunit of PI3K (PIK3R1) in vitro, when autophosphorylated on tyrosine residues. Interacts with SOCS7. Interacts (via the phosphorylated Tyr-1000), with SOCS3. Interacts (via the phosphorylated Tyr-1186, Tyr-1190, Tyr-1191) with SOCS1. Interacts with ARRB2. Interacts with GRB10; this interaction blocks the association between IRS1/IRS2 and INSR, significantly reduces insulin-stimulated tyrosine phosphorylation of IRS1 and IRS2 and thus decreases insulin signaling. Interacts with PDPK1. Interacts (via Tyr-1191) with GRB14 (via BPS domain); this interaction protects the tyrosines in the activation loop from dephosphorylation, but promotes dephosphorylation of Tyr-1000, this results in decreased interaction with, and phosphorylation of, IRS1. Interacts (via subunit alpha) with ENPP1 (via 485-599 AA); this interaction blocks autophosphorylation. Interacts with PTPRE; this interaction is dependent of Tyr-1186, Tyr-1190 and Tyr-1191 of the INSR. Interacts with STAT5B (via SH2 domain). Interacts with PTPRF. Interacts with GRB7. Interacts with CAV2 (tyrosine-phosphorylated form); the interaction is increased with 'Tyr-27'phosphorylation of CAV2. Interacts with ATIC; ATIC together with PRKAA2/AMPK2 and HACD3/PTPLAD1 is proposed to be part of a signaling netwok regulating INSR autophosphorylation and endocytosis. Interacts with the insulin receptor SORL1; this interaction strongly increases its surface exposure, hence strengthens insulin signal reception. Interacts (tyrosine phosphorylated) with CCDC88A/GIV (via SH2-like region); binding requires autophosphorylation of the Insr C-terminal region. Interacts with GNAI3; the interaction is probably mediated by CCDC88A/GIV. Interacts with LMBRD1. Interacts (in response to insulin stimulation) with NCK1; this interaction may recruit PTPN1 to mediate INSR dephosphorylation. Interacts with CD248; this interaction diminishes INSR autophosphorylation. After being transported from the endoplasmic reticulum to the Golgi apparatus, the single glycosylated precursor is further glycosylated and then cleaved, followed by its transport to the plasma membrane. Post-translationally, autophosphorylated on tyrosine residues in response to insulin. Phosphorylation of Tyr-1000 is required for binding to IRS1, SHC1 and STAT5B. May also be phosphorylated at Tyr-1186 and Tyr-1191 by mTORC2. Dephosphorylated by PTPRE at Tyr-1000, Tyr-1186, Tyr-1190 and Tyr-1191. Dephosphorylated by PTPRF and PTPN1. Dephosphorylated by PTPN2; down-regulates insulin-induced signaling. In terms of processing, S-nitrosylation at Cys-1084 by BLVRB inhibits the receptor tyrosine kinase, thereby inhibiting insulin signaling. Ubiquitinated by MARCHF1; leading to degradation thereby reducing surface INSR expression.

Its subcellular location is the cell membrane. The protein resides in the late endosome. It localises to the lysosome. The catalysed reaction is L-tyrosyl-[protein] + ATP = O-phospho-L-tyrosyl-[protein] + ADP + H(+). Its activity is regulated as follows. Activated in response to insulin. Autophosphorylation activates the kinase activity. PTPN1, PTPRE and PTPRF dephosphorylate important tyrosine residues, thereby reducing INSR activity. Inhibited by ENPP1. GRB10 and GRB14 inhibit the catalytic activity of the INSR, they block access of substrates to the activated receptor. SOCS1 and SOCS3 act as negative regulators of INSR activity, they bind to the activated INRS and interfere with the phosphorylation of INSR substrates. In terms of biological role, receptor tyrosine kinase which mediates the pleiotropic actions of insulin. Binding of insulin leads to phosphorylation of several intracellular substrates, including, insulin receptor substrates (IRS1, 2, 3, 4), SHC, GAB1, CBL and other signaling intermediates. Each of these phosphorylated proteins serve as docking proteins for other signaling proteins that contain Src-homology-2 domains (SH2 domain) that specifically recognize different phosphotyrosine residues, including the p85 regulatory subunit of PI3K and SHP2. Phosphorylation of IRSs proteins lead to the activation of two main signaling pathways: the PI3K-AKT/PKB pathway, which is responsible for most of the metabolic actions of insulin, and the Ras-MAPK pathway, which regulates expression of some genes and cooperates with the PI3K pathway to control cell growth and differentiation. Binding of the SH2 domains of PI3K to phosphotyrosines on IRS1 leads to the activation of PI3K and the generation of phosphatidylinositol-(3, 4, 5)-triphosphate (PIP3), a lipid second messenger, which activates several PIP3-dependent serine/threonine kinases, such as PDPK1 and subsequently AKT/PKB. The net effect of this pathway is to produce a translocation of the glucose transporter SLC2A4/GLUT4 from cytoplasmic vesicles to the cell membrane to facilitate glucose transport. Moreover, upon insulin stimulation, activated AKT/PKB is responsible for: anti-apoptotic effect of insulin by inducing phosphorylation of BAD; regulates the expression of gluconeogenic and lipogenic enzymes by controlling the activity of the winged helix or forkhead (FOX) class of transcription factors. Another pathway regulated by PI3K-AKT/PKB activation is mTORC1 signaling pathway which regulates cell growth and metabolism and integrates signals from insulin. AKT mediates insulin-stimulated protein synthesis by phosphorylating TSC2 thereby activating mTORC1 pathway. The Ras/RAF/MAP2K/MAPK pathway is mainly involved in mediating cell growth, survival and cellular differentiation of insulin. Phosphorylated IRS1 recruits GRB2/SOS complex, which triggers the activation of the Ras/RAF/MAP2K/MAPK pathway. In addition to binding insulin, the insulin receptor can bind insulin-like growth factors (IGFI and IGFII). When present in a hybrid receptor with IGF1R, binds IGF1. In adipocytes, inhibits lipolysis. In Rattus norvegicus (Rat), this protein is Insulin receptor (Insr).